Here is a 160-residue protein sequence, read N- to C-terminus: Cytochrome b6-f complex subunit 4 (160 aa).

The next 3 membrane-spanning stretches (helical) occupy residues 36–56 (LLYV…ALAV), 95–115 (LLGV…PFIE), and 131–151 (TVFL…ALPL).

It belongs to the cytochrome b family. PetD subfamily. The 4 large subunits of the cytochrome b6-f complex are cytochrome b6, subunit IV (17 kDa polypeptide, PetD), cytochrome f and the Rieske protein, while the 4 small subunits are PetG, PetL, PetM and PetN. The complex functions as a dimer.

Its subcellular location is the cellular thylakoid membrane. Its function is as follows. Component of the cytochrome b6-f complex, which mediates electron transfer between photosystem II (PSII) and photosystem I (PSI), cyclic electron flow around PSI, and state transitions. This Desmonostoc sp. (strain PCC 7906) (Nostoc sp. (strain PCC 7906)) protein is Cytochrome b6-f complex subunit 4.